The chain runs to 152 residues: Probable histone H2A.3 (152 aa).

Disordered stretches follow at residues 1-25 (MDAS…KKSV) and 129-152 (KTER…PKKA). The segment covering 7–25 (TTKKGAGGRKGGGPRKKSV) has biased composition (basic residues). Over residues 129–142 (KTERANTGGKEPKT) the composition is skewed to basic and acidic residues. Positions 148-151 (SPKK) match the SPKK motif motif.

The protein belongs to the histone H2A family. The nucleosome is a histone octamer containing two molecules each of H2A, H2B, H3 and H4 assembled in one H3-H4 heterotetramer and two H2A-H2B heterodimers. The octamer wraps approximately 147 bp of DNA.

Its subcellular location is the nucleus. The protein localises to the chromosome. Its function is as follows. Core component of nucleosome. Nucleosomes wrap and compact DNA into chromatin, limiting DNA accessibility to the cellular machineries which require DNA as a template. Histones thereby play a central role in transcription regulation, DNA repair, DNA replication and chromosomal stability. DNA accessibility is regulated via a complex set of post-translational modifications of histones, also called histone code, and nucleosome remodeling. This Medicago truncatula (Barrel medic) protein is Probable histone H2A.3.